The chain runs to 178 residues: Oligoribonuclease (178 aa).

The region spanning 7-168 (LIWIDLEMTG…DDIRESIAEL (162 aa)) is the Exonuclease domain. Residue Y128 is part of the active site.

This sequence belongs to the oligoribonuclease family.

The protein resides in the cytoplasm. Functionally, 3'-to-5' exoribonuclease specific for small oligoribonucleotides. The sequence is that of Oligoribonuclease from Pseudomonas syringae pv. syringae (strain B728a).